The following is a 326-amino-acid chain: ATP synthase subunit b 2 (326 aa).

The helical transmembrane segment at 2 to 22 (LIDWFTVVAQALNFLILVWLL) threads the bilayer. Basic and acidic residues-rich tracts occupy residues 275–298 (QQGRKEGRAVQNWDKAESEIRKEN) and 306–326 (PPPEAKAKPKPEEPKPEIGSP). The segment at 275–326 (QQGRKEGRAVQNWDKAESEIRKENLSPAKTEPPPEAKAKPKPEEPKPEIGSP) is disordered.

Belongs to the ATPase B chain family. F-type ATPases have 2 components, F(1) - the catalytic core - and F(0) - the membrane proton channel. F(1) has five subunits: alpha(3), beta(3), gamma(1), delta(1), epsilon(1). F(0) has three main subunits: a(1), b(2) and c(10-14). The alpha and beta chains form an alternating ring which encloses part of the gamma chain. F(1) is attached to F(0) by a central stalk formed by the gamma and epsilon chains, while a peripheral stalk is formed by the delta and b chains.

Its subcellular location is the cell inner membrane. F(1)F(0) ATP synthase produces ATP from ADP in the presence of a proton or sodium gradient. F-type ATPases consist of two structural domains, F(1) containing the extramembraneous catalytic core and F(0) containing the membrane proton channel, linked together by a central stalk and a peripheral stalk. During catalysis, ATP synthesis in the catalytic domain of F(1) is coupled via a rotary mechanism of the central stalk subunits to proton translocation. Its function is as follows. Component of the F(0) channel, it forms part of the peripheral stalk, linking F(1) to F(0). The polypeptide is ATP synthase subunit b 2 (Albidiferax ferrireducens (strain ATCC BAA-621 / DSM 15236 / T118) (Rhodoferax ferrireducens)).